A 460-amino-acid chain; its full sequence is CWF19-like protein 2 homolog (460 aa).

Disordered regions lie at residues 38–78 (GKTF…EDEK), 103–175 (KLES…TGTA), and 193–227 (RRHDDESVDDIAEMQKGKKKSDEKDKKRKEKESIK). The span at 54-68 (GSQQVRNDVMKSSDS) shows a compositional bias: polar residues. Positions 84–106 (KILKAEMKGDTDLVKKLKRKLES) form a coiled coil. Composition is skewed to basic and acidic residues over residues 113 to 131 (EPPKSKSKEVTMMRRDREG), 139 to 172 (RRSDSDRHGEGSSRMRREYEKSQDLDSMVREEKT), and 205 to 227 (EMQKGKKKSDEKDKKRKEKESIK). A coiled-coil region spans residues 210-231 (KKKSDEKDKKRKEKESIKEHKR).

It belongs to the CWF19 family.

In Caenorhabditis elegans, this protein is CWF19-like protein 2 homolog.